We begin with the raw amino-acid sequence, 290 residues long: UPF0761 membrane protein YihY (290 aa).

6 helical membrane passes run L44–F64, V104–L124, F140–I160, I183–I203, A210–L230, and V244–L264.

This sequence belongs to the UPF0761 family.

Its subcellular location is the cell inner membrane. This chain is UPF0761 membrane protein YihY, found in Escherichia coli O1:K1 / APEC.